The sequence spans 496 residues: Probable E3 ubiquitin-protein ligase XBOS32 (496 aa).

ANK repeat units lie at residues 50 to 79, 83 to 112, 117 to 147, 180 to 209, and 223 to 252; these read GRNS…EINL, RGQT…NVHR, NGGS…SMPN, GGLT…SVIE, and AGST…SLSA. The segment at 321-368 adopts an RING-type zinc-finger fold; the sequence is CAVCLEGSCSVAAEGCKHEFCTRCALYLCSTSYTSVSPAGAIPCPLCR.

The catalysed reaction is S-ubiquitinyl-[E2 ubiquitin-conjugating enzyme]-L-cysteine + [acceptor protein]-L-lysine = [E2 ubiquitin-conjugating enzyme]-L-cysteine + N(6)-ubiquitinyl-[acceptor protein]-L-lysine.. It functions in the pathway protein modification; protein ubiquitination. The protein is Probable E3 ubiquitin-protein ligase XBOS32 (XBOS32) of Oryza sativa subsp. japonica (Rice).